A 714-amino-acid polypeptide reads, in one-letter code: MSNVQEWQQLANKELSRREKTVDSLVHQTAEGIAIKPLYTEADLDNLEVTGTLPGLPPYVRGPRATMYTAQPWTIRQYAGFSTAKESNAFYRRNLAAGQKGLSVAFDLATHRGYDSDNPRVAGDVGKAGVAIDTVEDMKVLFDQIPLDKMSVSMTMNGAVLPVLAFYIVAAEEQGVTPDKLTGTIQNDILKEYLCRNTYIYPPKPSMRIIADIIAWCSGNMPRFNTISISGYHMGEAGANCVQQVAFTLADGIEYIKAAISAGLKIDDFAPRLSFFFGIGMDLFMNVAMLRAARYLWSEAVSGFGAQDPKSLALRTHCQTSGWSLTEQDPYNNVIRTTIEALAATLGGTQSLHTNAFDEALGLPTDFSARIARNTQIIIQEESELCRTVDPLAGSYYIESLTDQIVKQARAIIQQIDEAGGMAKAIEAGLPKRMIEEASAREQSLIDQGKRVIVGVNKYKLDHEDETDVLEIDNVMVRNEQIASLERIRATRDDAAVTAALNALTHAAQHNENLLAAAVNAARVRATLGEISDALEVAFDRYLVPSQCVTGVIAQSYHQSEKSASEFDAIVAQTEQFLADNGRRPRILIAKMGQDGHDRGAKVIASAYSDLGFDVDLSPMFSTPEEIARLAVENDVHVVGASSLAAGHKTLIPELVEALKKWGREDICVVAGGVIPPQDYAFLQERGVAAIYGPGTPMLDSVRDVLNLISQHHD.

The B12-binding domain occupies 584–714 (RPRILIAKMG…VLNLISQHHD (131 aa)). His597 lines the adenosylcob(III)alamin pocket.

The protein belongs to the methylmalonyl-CoA mutase family. In terms of assembly, homodimer. Interacts with ArgK. Adenosylcob(III)alamin is required as a cofactor.

The enzyme catalyses (R)-methylmalonyl-CoA = succinyl-CoA. In terms of biological role, catalyzes the interconversion of succinyl-CoA and methylmalonyl-CoA. Could be part of a pathway that converts succinate to propionate. This Escherichia coli (strain K12) protein is Methylmalonyl-CoA mutase (scpA).